The primary structure comprises 467 residues: MGSKSPDGHRQGPNAESPSSSVAATTNPPKPAAASGLVQGMLDGDDEDEDGDDDGDNQRIGADLKSGVLPNNDGKKRKRKSNKKKKKKTSKGQQTTPPRVSLPSIFHDQRYPEGEIVEYAARNDNLQRTTAEELRHQAAIHNMDDEFLTDYRQAAEVHRQVRQYVQSIAKPGILMSELAEEIETGVRALTGHQGIETGDALKAGLAFPTGLCLNNVAAHWTPNPGAKEVILKHDDVLKIDFGVHVNGRIVDSAFTVASNPVYDNLLTAVKAATNTGLKEAGIDARIDHISGEIQEVMESYEVEINGKAIPVKALRSLTGHNILRYKIHGEKQVPFVKSKTTQRMEEGDVFAIETFGSTGKGYTRDEVGVYGYGLNEHASTAGLHHASAKSLLKTIRENFGTLVFSRRYLEHMGVKNYHLGMRSLISNDIVECYAPLVDVPGSYVAQFEHTVLLRPNCKEIISRGDDY.

Positions M1–R10 are enriched in basic and acidic residues. A disordered region spans residues M1–I105. Acidic residues predominate over residues D43 to G55. Residues K75–S90 are compositionally biased toward basic residues. Residue H219 coordinates substrate. 3 residues coordinate a divalent metal cation: D240, D251, and H320. Residue H328 participates in substrate binding. E353 and E448 together coordinate a divalent metal cation.

The protein belongs to the peptidase M24A family. Methionine aminopeptidase eukaryotic type 2 subfamily. It depends on Co(2+) as a cofactor. Zn(2+) is required as a cofactor. The cofactor is Mn(2+). Fe(2+) serves as cofactor.

The protein resides in the cytoplasm. It carries out the reaction Release of N-terminal amino acids, preferentially methionine, from peptides and arylamides.. Functionally, cotranslationally removes the N-terminal methionine from nascent proteins. The N-terminal methionine is often cleaved when the second residue in the primary sequence is small and uncharged (Met-Ala-, Cys, Gly, Pro, Ser, Thr, or Val). The chain is Methionine aminopeptidase 2-1 from Arthroderma gypseum (strain ATCC MYA-4604 / CBS 118893) (Microsporum gypseum).